A 114-amino-acid polypeptide reads, in one-letter code: Hydrogenase maturation factor HypA (114 aa).

Histidine 2 provides a ligand contact to Ni(2+). Residues cysteine 70, cysteine 73, cysteine 86, and cysteine 89 each contribute to the Zn(2+) site.

Belongs to the HypA/HybF family.

Functionally, involved in the maturation of [NiFe] hydrogenases. Required for nickel insertion into the metal center of the hydrogenase. The sequence is that of Hydrogenase maturation factor HypA from Trichodesmium erythraeum (strain IMS101).